We begin with the raw amino-acid sequence, 224 residues long: UPF0758 protein Pmen_4376 (224 aa).

Residues 102–224 (ALESPQAVRD…PLSMAELGWM (123 aa)) form the MPN domain. Zn(2+)-binding residues include His173, His175, and Asp186. The JAMM motif motif lies at 173–186 (HNHPSGVCEPSQAD).

It belongs to the UPF0758 family.

The sequence is that of UPF0758 protein Pmen_4376 from Ectopseudomonas mendocina (strain ymp) (Pseudomonas mendocina).